Here is a 244-residue protein sequence, read N- to C-terminus: MDHEIHSFIKRKLKGVGDVWFSYFMMSKNSTSQPYIISNYPEAWMKEYIKKEMFLSDPIIVASLARITPFSWDDNDIVTLRAKNQDVFISSVQHDISSGYTFVLHDHDNNVATLSIANHLEDANFEKCMKNHENDLQMLLVNVHEKVMAYQRAINDQDNPPDNSRNALLSPRETEVLFLVSSGRTYKEVSRILGISEVTVKFHINNSVRKLDVINSRHAITKALELNLFHSPCEPVVMKHMDAR.

In terms of domain architecture, HTH luxR-type spans 162–227 (DNSRNALLSP…HAITKALELN (66 aa)). Positions 186-205 (YKEVSRILGISEVTVKFHIN) form a DNA-binding region, H-T-H motif.

Belongs to the autoinducer-regulated transcriptional regulatory protein family.

Functions as an OHLL responsive transcriptional regulator which acts in the control of the biosynthesis of carbapenem antibiotics. This is Transcriptional activator protein CarR (carR) from Pectobacterium carotovorum subsp. carotovorum (Erwinia carotovora subsp. carotovora).